The chain runs to 218 residues: Probable chemoreceptor glutamine deamidase CheD (218 aa).

This sequence belongs to the CheD family.

It catalyses the reaction L-glutaminyl-[protein] + H2O = L-glutamyl-[protein] + NH4(+). Functionally, probably deamidates glutamine residues to glutamate on methyl-accepting chemotaxis receptors (MCPs), playing an important role in chemotaxis. The chain is Probable chemoreceptor glutamine deamidase CheD from Saccharophagus degradans (strain 2-40 / ATCC 43961 / DSM 17024).